A 667-amino-acid chain; its full sequence is WD repeat-containing protein 48 homolog (667 aa).

8 WD repeats span residues 26–65, 71–110, 113–152, 164–203, 206–245, 248–287, 290–329, and 350–389; these read QHRN…NEKY, HHND…CMST, THRD…ALTA, GSKD…RSMK, GHTE…CVQT, VHKE…NKML, EEQA…RCTL, and KGGA…KKEQ. The interval 591–615 is disordered; that stretch reads ETTPSGGNANNSLQNSQSDANSEGS.

Belongs to the WD repeat WDR48 family. Catalytic component of the Usp12-46 deubiquitylase complex consisting of Usp12-46, Wdr20 and Uaf1; regulatory subunit that, together wtih Wdr20, stabilizes Usp12-46. The Usp12-46 deubiquitylase complex associates with arr/arrow; the interaction leads to deubiquitination and stabilization of arr/arrow.

In terms of biological role, regulatory component of the Usp12-46 deubiquitylase complex. activates deubiquitination by increasing the catalytic turnover without increasing the affinity of deubiquitinating enzymes for the substrate. The complex deubiquitylates the wg/wingless-signaling receptor arr/arrow, which stabilizes the receptor and increases its concentration at the cell surface; this enhances the sensitivity of cells to wg/wingless-signal stimulation. This increases the amplitude and spatial range of the signaling response to the wg/wingless morphogen gradient, facilitating the precise concentration-dependent regulation of its target genes. Together with Wdr20 and Usp12-46 required for wg/wingless-mediated signaling in the wing imaginal disc and for wg/wingless-dependent regulation of intestinal stem cell proliferation. The sequence is that of WD repeat-containing protein 48 homolog from Drosophila ananassae (Fruit fly).